The following is a 795-amino-acid chain: Phenylalanine--tRNA ligase beta subunit (795 aa).

Residues 39–148 (AGTFNGVKVG…IDAPIGMDFR (110 aa)) form the tRNA-binding domain. Residues 401-476 (PKPNKVALRR…RIYGYDNIPN (76 aa)) enclose the B5 domain. Residues aspartate 454, aspartate 460, glutamate 463, and glutamate 464 each contribute to the Mg(2+) site. One can recognise an FDX-ACB domain in the interval 701 to 794 (SKFPANRRDI…VSEKFGASLR (94 aa)).

Belongs to the phenylalanyl-tRNA synthetase beta subunit family. Type 1 subfamily. Tetramer of two alpha and two beta subunits. It depends on Mg(2+) as a cofactor.

It is found in the cytoplasm. The catalysed reaction is tRNA(Phe) + L-phenylalanine + ATP = L-phenylalanyl-tRNA(Phe) + AMP + diphosphate + H(+). In Vibrio vulnificus (strain CMCP6), this protein is Phenylalanine--tRNA ligase beta subunit.